Here is a 453-residue protein sequence, read N- to C-terminus: Transcription factor bHLH110 (453 aa).

2 disordered regions span residues 1 to 37 (MDSA…YGAS) and 177 to 197 (SSLP…RGNF). Low complexity-rich tracts occupy residues 8–32 (QLQD…SDPS) and 177–192 (SSLP…SSQS). In terms of domain architecture, bHLH spans 322–371 (VESRSSCPPFKVRKEKLGDRIAALQQLVSPFGKTDTASVLMEAIGYIKFL). The interval 386-411 (SRNRPGKASQLVSQSQEGDEEETRDL) is disordered.

In terms of assembly, homodimer.

The protein resides in the nucleus. This is Transcription factor bHLH110 (BHLH110) from Arabidopsis thaliana (Mouse-ear cress).